A 453-amino-acid chain; its full sequence is tRNA modification GTPase MnmE (453 aa).

Residues Arg-22, Glu-79, and Lys-119 each coordinate (6S)-5-formyl-5,6,7,8-tetrahydrofolate. The 162-residue stretch at 215–376 (GMKVVIAGRP…LQQHLKSLMG (162 aa)) folds into the TrmE-type G domain. Residue Asn-225 coordinates K(+). GTP contacts are provided by residues 225-230 (NAGKSS), 244-250 (TEIAGTT), 269-272 (DTAG), and 334-337 (NKAD). Position 229 (Ser-229) interacts with Mg(2+). Thr-244, Ile-246, and Thr-249 together coordinate K(+). Mg(2+) is bound at residue Thr-250. Lys-453 contributes to the (6S)-5-formyl-5,6,7,8-tetrahydrofolate binding site.

This sequence belongs to the TRAFAC class TrmE-Era-EngA-EngB-Septin-like GTPase superfamily. TrmE GTPase family. Homodimer. Heterotetramer of two MnmE and two MnmG subunits. K(+) is required as a cofactor.

It is found in the cytoplasm. Functionally, exhibits a very high intrinsic GTPase hydrolysis rate. Involved in the addition of a carboxymethylaminomethyl (cmnm) group at the wobble position (U34) of certain tRNAs, forming tRNA-cmnm(5)s(2)U34. In Shewanella sediminis (strain HAW-EB3), this protein is tRNA modification GTPase MnmE.